The chain runs to 454 residues: MSTTDTIVAQATPPGRGGVGILRVSGRAASEVAHAVLGKLPKPRYADYLPFKDVDGSTLDQGIALYFPGPNSFTGEDVLELQGHGGPVILDLLLKRILALPGLRIARPGEFSERAFLNDKLDLAQAEAIADLIDASSEQAARSAVNSLQGAFSARIHQLVEALTHLRIYVEAAIDFPDEEIDFLSDGKIEGQLNGVMADLEQVRTEARQGSLLREGMKVVIAGRPNAGKSSLLNALAGREAAIVTDIAGTTRDVLREHIHIDGMPLHIIDTAGLREANDEVERIGIERAWNEIEQADRVLFMVDGTTTDATEPAAIWPEFMARLPATLPITVVRNKADITGETLGLTKVNGHSLIRLSARTGEGIDLLRDHLKQSMGFTSNTEGGFLARRRHLQALETAARHLIQGHEQLVSAYAGELLAEELRLAQQSLSEITGEFSSDDLLGRIFSSFCIGK.

3 residues coordinate (6S)-5-formyl-5,6,7,8-tetrahydrofolate: Arg-23, Glu-80, and Lys-120. The 162-residue stretch at 216–377 (GMKVVIAGRP…LRDHLKQSMG (162 aa)) folds into the TrmE-type G domain. Asn-226 is a K(+) binding site. Residues 226–231 (NAGKSS), 245–251 (TDIAGTT), 270–273 (DTAG), 335–338 (NKAD), and 358–360 (SAR) contribute to the GTP site. Ser-230 contacts Mg(2+). Residues Thr-245, Ile-247, and Thr-250 each coordinate K(+). Mg(2+) is bound at residue Thr-251. Lys-454 contributes to the (6S)-5-formyl-5,6,7,8-tetrahydrofolate binding site.

This sequence belongs to the TRAFAC class TrmE-Era-EngA-EngB-Septin-like GTPase superfamily. TrmE GTPase family. As to quaternary structure, homodimer. Heterotetramer of two MnmE and two MnmG subunits. The cofactor is K(+).

The protein localises to the cytoplasm. In terms of biological role, exhibits a very high intrinsic GTPase hydrolysis rate. Involved in the addition of a carboxymethylaminomethyl (cmnm) group at the wobble position (U34) of certain tRNAs, forming tRNA-cmnm(5)s(2)U34. This Yersinia pestis bv. Antiqua (strain Antiqua) protein is tRNA modification GTPase MnmE.